Consider the following 335-residue polypeptide: L-tyrosine isonitrile synthase (335 aa).

Belongs to the isocyanide synthase family.

The catalysed reaction is D-ribulose 5-phosphate + L-tyrosine = (2S)-3-(4-hydroxyphenyl)-2-isocyanopropanoate + hydroxyacetone + formaldehyde + phosphate + H2O + H(+). Its function is as follows. Involved in the biosynthesis of rhabduscin, a tyrosine derivative which is a potent inhibitor of phenoloxidase, a key component of the insect's innate immune system. Responsible for the synthesis of the isonitrile group on tyrosine using the C2 of ribulose 5-phosphate as the source of the carbon atom. This Xenorhabdus nematophila (strain ATCC 19061 / DSM 3370 / CCUG 14189 / LMG 1036 / NCIMB 9965 / AN6) protein is L-tyrosine isonitrile synthase.